A 729-amino-acid chain; its full sequence is Elongation factor 2 (729 aa).

Positions 19–262 constitute a tr-type G domain; that stretch reads EQIRNIAIAA…MVCEHFPNPI (244 aa). GTP contacts are provided by residues 28-35, 94-98, and 148-151; these read AHVDHGKT, DTPGH, and NKVD. His597 carries the post-translational modification Diphthamide.

This sequence belongs to the TRAFAC class translation factor GTPase superfamily. Classic translation factor GTPase family. EF-G/EF-2 subfamily.

Its subcellular location is the cytoplasm. Functionally, catalyzes the GTP-dependent ribosomal translocation step during translation elongation. During this step, the ribosome changes from the pre-translocational (PRE) to the post-translocational (POST) state as the newly formed A-site-bound peptidyl-tRNA and P-site-bound deacylated tRNA move to the P and E sites, respectively. Catalyzes the coordinated movement of the two tRNA molecules, the mRNA and conformational changes in the ribosome. This Halomicrobium mukohataei (strain ATCC 700874 / DSM 12286 / JCM 9738 / NCIMB 13541) (Haloarcula mukohataei) protein is Elongation factor 2.